The sequence spans 250 residues: UPF0736 protein RBAM_011410 (250 aa).

It belongs to the UPF0736 family.

The sequence is that of UPF0736 protein RBAM_011410 from Bacillus velezensis (strain DSM 23117 / BGSC 10A6 / LMG 26770 / FZB42) (Bacillus amyloliquefaciens subsp. plantarum).